The primary structure comprises 487 residues: GTPase Der (487 aa).

EngA-type G domains lie at Phe-3–Ala-167 and Leu-203–Asn-378. GTP contacts are provided by residues Gly-9–Ser-16, Asp-56–Leu-60, Asn-119–Glu-122, Gly-209–Ser-216, Asp-256–Met-260, and Asn-321–Asp-324. Residues Arg-379–Gly-463 enclose the KH-like domain. Positions Pro-451–Asp-487 are disordered. The segment covering Arg-471–Asp-487 has biased composition (basic residues).

It belongs to the TRAFAC class TrmE-Era-EngA-EngB-Septin-like GTPase superfamily. EngA (Der) GTPase family. In terms of assembly, associates with the 50S ribosomal subunit.

GTPase that plays an essential role in the late steps of ribosome biogenesis. In Cereibacter sphaeroides (strain ATCC 17029 / ATH 2.4.9) (Rhodobacter sphaeroides), this protein is GTPase Der.